A 153-amino-acid chain; its full sequence is MASLEERLTEMLAPSVEDLGYELVGVEYIRAGKHSTLRVYIDQDEGILVDDCAAVSRQVSAIMDVEDPITNEYSLEVSSPGMNRPLFKAEHYQIFAGEEVKIQLRMPIQNRRRWKGVIVSAEDEIICLNIEGREERFSLSNIQKANIVPKFDN.

This sequence belongs to the RimP family.

It localises to the cytoplasm. In terms of biological role, required for maturation of 30S ribosomal subunits. This chain is Ribosome maturation factor RimP, found in Psychromonas ingrahamii (strain DSM 17664 / CCUG 51855 / 37).